The chain runs to 946 residues: Glycine dehydrogenase (decarboxylating) (946 aa).

An N6-(pyridoxal phosphate)lysine modification is found at K700.

It belongs to the GcvP family. As to quaternary structure, the glycine cleavage system is composed of four proteins: P, T, L and H. Requires pyridoxal 5'-phosphate as cofactor.

The enzyme catalyses N(6)-[(R)-lipoyl]-L-lysyl-[glycine-cleavage complex H protein] + glycine + H(+) = N(6)-[(R)-S(8)-aminomethyldihydrolipoyl]-L-lysyl-[glycine-cleavage complex H protein] + CO2. Functionally, the glycine cleavage system catalyzes the degradation of glycine. The P protein binds the alpha-amino group of glycine through its pyridoxal phosphate cofactor; CO(2) is released and the remaining methylamine moiety is then transferred to the lipoamide cofactor of the H protein. This is Glycine dehydrogenase (decarboxylating) from Pseudomonas fluorescens (strain SBW25).